Here is a 396-residue protein sequence, read N- to C-terminus: Probable mannan endo-1,4-beta-mannosidase A-2 (396 aa).

A signal peptide spans 1–21 (MKVPRLLLALGGLASIHIASA). Trp99 provides a ligand contact to substrate. Asn120 carries N-linked (GlcNAc...) asparagine glycosylation. Substrate is bound at residue Asn212. Glu213 (proton donor) is an active-site residue. The N-linked (GlcNAc...) asparagine glycan is linked to Asn270. Tyr288 is a binding site for substrate. Catalysis depends on Glu321, which acts as the Nucleophile. Trp351 provides a ligand contact to substrate.

It belongs to the glycosyl hydrolase 5 (cellulase A) family.

It localises to the secreted. The enzyme catalyses Random hydrolysis of (1-&gt;4)-beta-D-mannosidic linkages in mannans, galactomannans and glucomannans.. Its function is as follows. Endo-1,4-mannanase, a crucial enzyme for depolymerization of seed galactomannans and wood galactoglucomannans. The polypeptide is Probable mannan endo-1,4-beta-mannosidase A-2 (manA-2) (Aspergillus terreus (strain NIH 2624 / FGSC A1156)).